The chain runs to 453 residues: tRNA-2-methylthio-N(6)-dimethylallyladenosine synthase (453 aa).

Residues 4–118 enclose the MTTase N-terminal domain; that stretch reads KKFYIENYGC…IPNLINNFFK (115 aa). Residues Cys-13, Cys-49, Cys-83, Cys-156, Cys-160, and Cys-163 each contribute to the [4Fe-4S] cluster site. The Radical SAM core domain maps to 142-388; it reads EEKKITAFVT…NLQKTHSYYR (247 aa). Positions 390-453 constitute a TRAM domain; sequence RKYIGSIQDI…SATLVGDIYV (64 aa).

The protein belongs to the methylthiotransferase family. MiaB subfamily. Monomer. It depends on [4Fe-4S] cluster as a cofactor.

The protein resides in the cytoplasm. It carries out the reaction N(6)-dimethylallyladenosine(37) in tRNA + (sulfur carrier)-SH + AH2 + 2 S-adenosyl-L-methionine = 2-methylsulfanyl-N(6)-dimethylallyladenosine(37) in tRNA + (sulfur carrier)-H + 5'-deoxyadenosine + L-methionine + A + S-adenosyl-L-homocysteine + 2 H(+). Its function is as follows. Catalyzes the methylthiolation of N6-(dimethylallyl)adenosine (i(6)A), leading to the formation of 2-methylthio-N6-(dimethylallyl)adenosine (ms(2)i(6)A) at position 37 in tRNAs that read codons beginning with uridine. This Karelsulcia muelleri (strain GWSS) (Sulcia muelleri) protein is tRNA-2-methylthio-N(6)-dimethylallyladenosine synthase.